The following is a 1755-amino-acid chain: Transposon Ty1-LR3 Gag-Pol polyprotein (1755 aa).

Over residues 1-16 the composition is skewed to low complexity; it reads MESQQLSQHSHISHGS. Disordered stretches follow at residues 1 to 93, 126 to 173, and 352 to 421; these read MESQ…MMTQ, PQSQ…RPPP, and GSRN…SKST. Composition is skewed to polar residues over residues 48 to 60 and 127 to 152; these read TKAN…TPAS and QSQF…GNTF. The segment covering 153 to 165 has biased composition (low complexity); sequence TDSSSADSDMTST. Residues 299–401 are RNA-binding; sequence NNGIHINNKV…NSKSKTARAH (103 aa). Over residues 402 to 418 the composition is skewed to low complexity; the sequence is NVSTSNNSPSTDNDSIS. At S416 the chain carries Phosphoserine. D461 (for protease activity; shared with dimeric partner) is an active-site residue. The segment at 583 to 640 is integrase-type zinc finger-like; the sequence is NVHTSESTRKYPYPFIHRMLAHANAQTIRYSLKNNTITYFNESDVDWSSAIDYQCPDC. One can recognise an Integrase catalytic domain in the interval 660–829; the sequence is NSYEPFQYLH…SQHAGLAGLD (170 aa). Residues D671 and D736 each coordinate Mg(2+). Disordered stretches follow at residues 956–1087, 1092–1111, and 1129–1172; these read SKAV…ETEK, RSPS…NIVP, and ADLP…SNAY. A compositionally biased stretch (low complexity) spans 960–969; it reads SPTDSTPPST. Residues 1005-1015 are compositionally biased toward polar residues; it reads STPQISNIEST. The span at 1038-1052 shows a compositional bias: basic and acidic residues; it reads ESSHASKSKDFRHSD. 2 stretches are compositionally biased toward polar residues: residues 1053-1082 and 1101-1111; these read SYSN…QISD and PENNSSHNIVP. The Bipartite nuclear localization signal signature appears at 1178–1212; the sequence is KKRSLEDNETEIKVSRDTWNTKNMRSLEPPRSKKR. The region spanning 1338–1476 is the Reverse transcriptase Ty1/copia-type domain; that stretch reads NNYYITQLDI…DILGLEIKYQ (139 aa). Mg(2+) contacts are provided by D1346, D1427, D1428, D1610, E1652, and D1685. Residues 1610 to 1752 form the RNase H Ty1/copia-type domain; it reads DASYGNQPYY…IKTFKLLTNK (143 aa).

The capsid protein forms a homotrimer, from which the VLPs are assembled. The protease is a homodimer, whose active site consists of two apposed aspartic acid residues. In terms of processing, initially, virus-like particles (VLPs) are composed of the structural unprocessed proteins Gag and Gag-Pol, and also contain the host initiator methionine tRNA (tRNA(i)-Met) which serves as a primer for minus-strand DNA synthesis, and a dimer of genomic Ty RNA. Processing of the polyproteins occurs within the particle and proceeds by an ordered pathway, called maturation. First, the protease (PR) is released by autocatalytic cleavage of the Gag-Pol polyprotein yielding capsid protein p45 and a Pol-p154 precursor protein. This cleavage is a prerequisite for subsequent processing of Pol-p154 at the remaining sites to release the mature structural and catalytic proteins. Maturation takes place prior to the RT reaction and is required to produce transposition-competent VLPs.

It is found in the cytoplasm. The protein localises to the nucleus. The catalysed reaction is DNA(n) + a 2'-deoxyribonucleoside 5'-triphosphate = DNA(n+1) + diphosphate. It catalyses the reaction Endonucleolytic cleavage to 5'-phosphomonoester.. Its function is as follows. Capsid protein (CA) is the structural component of the virus-like particle (VLP), forming the shell that encapsulates the retrotransposons dimeric RNA genome. The particles are assembled from trimer-clustered units and there are holes in the capsid shells that allow for the diffusion of macromolecules. CA also has nucleocapsid-like chaperone activity, promoting primer tRNA(i)-Met annealing to the multipartite primer-binding site (PBS), dimerization of Ty1 RNA and initiation of reverse transcription. In terms of biological role, the aspartyl protease (PR) mediates the proteolytic cleavages of the Gag and Gag-Pol polyproteins after assembly of the VLP. Reverse transcriptase/ribonuclease H (RT) is a multifunctional enzyme that catalyzes the conversion of the retro-elements RNA genome into dsDNA within the VLP. The enzyme displays a DNA polymerase activity that can copy either DNA or RNA templates, and a ribonuclease H (RNase H) activity that cleaves the RNA strand of RNA-DNA heteroduplexes during plus-strand synthesis and hydrolyzes RNA primers. The conversion leads to a linear dsDNA copy of the retrotransposon that includes long terminal repeats (LTRs) at both ends. Functionally, integrase (IN) targets the VLP to the nucleus, where a subparticle preintegration complex (PIC) containing at least integrase and the newly synthesized dsDNA copy of the retrotransposon must transit the nuclear membrane. Once in the nucleus, integrase performs the integration of the dsDNA into the host genome. The chain is Transposon Ty1-LR3 Gag-Pol polyprotein (TY1B-LR3) from Saccharomyces cerevisiae (strain ATCC 204508 / S288c) (Baker's yeast).